Consider the following 906-residue polypeptide: Inter-alpha-trypsin inhibitor heavy chain H1 (906 aa).

An N-terminal signal peptide occupies residues 1 to 22 (MGLRGLLCVCLVSLLALQAVAA). A propeptide spanning residues 23–29 (QGSPTRN) is cleaved from the precursor. The VIT domain maps to 32–161 (GGKKRMAVDA…KATFRLTYEE (130 aa)). A glycan (S-linked (Hex...) cysteine) is linked at cysteine 55. A Phosphoserine modification is found at serine 124. Residues 287–470 (NVVFVIDISS…QQLQGFYEQV (184 aa)) form the VWFA domain. 2 positions are modified to phosphothreonine: threonine 397 and threonine 402. The N-linked (GlcNAc...) asparagine glycan is linked to asparagine 583. O-linked (GalNAc...) serine glycosylation occurs at serine 643. Threonine 648 carries O-linked (GalNAc...) threonine glycosylation. Aspartate 667 carries the aspartate 1-(chondroitin 4-sulfate)-ester modification. Residues 668–906 (PHFLIHVPQK…HTDYIVPDIF (239 aa)) constitute a propeptide that is removed on maturation. Asparagine 745 carries N-linked (GlcNAc...) asparagine glycosylation.

It belongs to the ITIH family. As to quaternary structure, I-alpha-I plasma protease inhibitors are assembled from one or two heavy chains (HC) and one light chain, bikunin. Inter-alpha-inhibitor (I-alpha-I) is composed of ITIH1/HC1, ITIH2/HC2 and bikunin. Interacts with TNFAIP6 (via Link and CUB domains). Heavy chains are linked to bikunin via chondroitin 4-sulfate esterified to the alpha-carboxyl of the C-terminal aspartate after propeptide cleavage. In terms of processing, the S-linked glycan is composed of two 6-carbon sugars, possibly Glc or Gal.

The protein localises to the secreted. May act as a carrier of hyaluronan in serum or as a binding protein between hyaluronan and other matrix protein, including those on cell surfaces in tissues to regulate the localization, synthesis and degradation of hyaluronan which are essential to cells undergoing biological processes. The chain is Inter-alpha-trypsin inhibitor heavy chain H1 (ITIH1) from Bos taurus (Bovine).